The following is a 51-amino-acid chain: Sperm protamine P1 (51 aa).

It belongs to the protamine P1 family. As to expression, testis.

Its subcellular location is the nucleus. It localises to the chromosome. In terms of biological role, protamines substitute for histones in the chromatin of sperm during the haploid phase of spermatogenesis. They compact sperm DNA into a highly condensed, stable and inactive complex. This is Sperm protamine P1 (PRM1) from Trachypithecus cristatus (Silvered leaf-monkey).